Reading from the N-terminus, the 426-residue chain is Serine--tRNA ligase (426 aa).

233-235 provides a ligand contact to L-serine; that stretch reads TAE. 264–266 is a binding site for ATP; it reads RSE. E287 lines the L-serine pocket. ATP is bound at residue 351-354; that stretch reads EISS. An L-serine-binding site is contributed by S387.

It belongs to the class-II aminoacyl-tRNA synthetase family. Type-1 seryl-tRNA synthetase subfamily. Homodimer. The tRNA molecule binds across the dimer.

It is found in the cytoplasm. The enzyme catalyses tRNA(Ser) + L-serine + ATP = L-seryl-tRNA(Ser) + AMP + diphosphate + H(+). It catalyses the reaction tRNA(Sec) + L-serine + ATP = L-seryl-tRNA(Sec) + AMP + diphosphate + H(+). The protein operates within aminoacyl-tRNA biosynthesis; selenocysteinyl-tRNA(Sec) biosynthesis; L-seryl-tRNA(Sec) from L-serine and tRNA(Sec): step 1/1. Catalyzes the attachment of serine to tRNA(Ser). Is also able to aminoacylate tRNA(Sec) with serine, to form the misacylated tRNA L-seryl-tRNA(Sec), which will be further converted into selenocysteinyl-tRNA(Sec). The protein is Serine--tRNA ligase of Clostridium botulinum (strain Loch Maree / Type A3).